Consider the following 246-residue polypeptide: Tyrosine recombinase XerD-like (246 aa).

The Core-binding (CB) domain occupies 1–72 (MINDINNFIE…AVNQFLFFLY (72 aa)). The 163-residue stretch at 84 to 246 (QETEKITLTQ…TPITLERYYR (163 aa)) folds into the Tyr recombinase domain. Catalysis depends on residues Lys-149 and Arg-212. Tyr-244 acts as the O-(3'-phospho-DNA)-tyrosine intermediate in catalysis.

This sequence belongs to the 'phage' integrase family. XerD-like subfamily.

The protein resides in the cytoplasm. Its function is as follows. Putative tyrosine recombinase. Not involved in the cutting and rejoining of the recombining DNA molecules on dif(SL) site. The sequence is that of Tyrosine recombinase XerD-like from Streptococcus agalactiae serotype III (strain NEM316).